The following is a 271-amino-acid chain: 4-hydroxy-tetrahydrodipicolinate reductase (271 aa).

G8–M13 provides a ligand contact to NAD(+). Residue R35 participates in NADP(+) binding. Residues G100–T102 and A124–M127 contribute to the NAD(+) site. H157 (proton donor/acceptor) is an active-site residue. H158 serves as a coordination point for (S)-2,3,4,5-tetrahydrodipicolinate. The active-site Proton donor is the K161. G167 to T168 lines the (S)-2,3,4,5-tetrahydrodipicolinate pocket.

This sequence belongs to the DapB family.

It localises to the cytoplasm. The catalysed reaction is (S)-2,3,4,5-tetrahydrodipicolinate + NAD(+) + H2O = (2S,4S)-4-hydroxy-2,3,4,5-tetrahydrodipicolinate + NADH + H(+). It carries out the reaction (S)-2,3,4,5-tetrahydrodipicolinate + NADP(+) + H2O = (2S,4S)-4-hydroxy-2,3,4,5-tetrahydrodipicolinate + NADPH + H(+). It functions in the pathway amino-acid biosynthesis; L-lysine biosynthesis via DAP pathway; (S)-tetrahydrodipicolinate from L-aspartate: step 4/4. Functionally, catalyzes the conversion of 4-hydroxy-tetrahydrodipicolinate (HTPA) to tetrahydrodipicolinate. The polypeptide is 4-hydroxy-tetrahydrodipicolinate reductase (Myxococcus xanthus (strain DK1622)).